Consider the following 401-residue polypeptide: Tyrosine--tRNA ligase (401 aa).

Residues 42-51 (PTAPDLHLGH) carry the 'HIGH' region motif. Positions 226–230 (KMSKS) match the 'KMSKS' region motif. Lysine 229 lines the ATP pocket. In terms of domain architecture, S4 RNA-binding spans 336 to 397 (IALAQLLKQI…GKRRIAKLSI (62 aa)).

This sequence belongs to the class-I aminoacyl-tRNA synthetase family. TyrS type 2 subfamily. Homodimer.

The protein localises to the cytoplasm. It carries out the reaction tRNA(Tyr) + L-tyrosine + ATP = L-tyrosyl-tRNA(Tyr) + AMP + diphosphate + H(+). Functionally, catalyzes the attachment of tyrosine to tRNA(Tyr) in a two-step reaction: tyrosine is first activated by ATP to form Tyr-AMP and then transferred to the acceptor end of tRNA(Tyr). The polypeptide is Tyrosine--tRNA ligase (Legionella pneumophila subsp. pneumophila (strain Philadelphia 1 / ATCC 33152 / DSM 7513)).